The primary structure comprises 441 residues: ACT domain-containing protein ACR8 (441 aa).

ACT domains follow at residues 34–110, 115–196, 248–324, and 326–405; these read IVKV…NIEV, ALEL…SAAK, VVNV…ALEG, and RLEL…TMYH.

Expressed in roots, leaves, flowers and siliques.

Functionally, may bind amino acids. The chain is ACT domain-containing protein ACR8 from Arabidopsis thaliana (Mouse-ear cress).